The primary structure comprises 213 residues: MKPYQRQFIEFALNKQVLKFGEFTLKSGRKSPYFFNAGLFNTGRDLALLGRFYAEALVDSGIEFDLLFGPAYKGIPIATTTAVALAEHHDKDLPYCFNRKEAKDHGEGGSLVGSALQGRVMLVDDVITAGTAIRESMEIIQAHRATLAGVLISLDRQERGRGEISAIQEVERDYGCKVISIITLKDLIAYLEEKLDMAEHLAAVRAYREEFGV.

Lysine 26 lines the 5-phospho-alpha-D-ribose 1-diphosphate pocket. Phenylalanine 34–phenylalanine 35 contacts orotate. 5-phospho-alpha-D-ribose 1-diphosphate-binding positions include tyrosine 72–lysine 73, arginine 99, lysine 100, lysine 103, histidine 105, and aspartate 124–alanine 132. Orotate is bound by residues threonine 128 and arginine 156.

It belongs to the purine/pyrimidine phosphoribosyltransferase family. PyrE subfamily. In terms of assembly, homodimer. The cofactor is Mg(2+).

The enzyme catalyses orotidine 5'-phosphate + diphosphate = orotate + 5-phospho-alpha-D-ribose 1-diphosphate. The protein operates within pyrimidine metabolism; UMP biosynthesis via de novo pathway; UMP from orotate: step 1/2. Its function is as follows. Catalyzes the transfer of a ribosyl phosphate group from 5-phosphoribose 1-diphosphate to orotate, leading to the formation of orotidine monophosphate (OMP). This Salmonella paratyphi A (strain ATCC 9150 / SARB42) protein is Orotate phosphoribosyltransferase.